Consider the following 548-residue polypeptide: Rop guanine nucleotide exchange factor 1 (548 aa).

The span at 1 to 12 shows a compositional bias: acidic residues; sequence MGSLSSEEDDEV. Residues 1–38 are disordered; it reads MGSLSSEEDDEVSSERCGSYSPSADISESESSSSFSCH. A compositionally biased stretch (low complexity) spans 19–36; the sequence is SYSPSADISESESSSSFS. One can recognise a PRONE domain in the interval 81 to 462; it reads DKQPDNDLSE…DAMRRSISVT (382 aa). The segment at 458-548 is involved in auto-inhibition; it reads SISVTESLSL…RVTGVTPERD (91 aa). 2 positions are modified to phosphoserine: S460 and S480.

In terms of assembly, interacts with ARAC10/ROP11 and FER. Forms a complex with ARAC11/ROP1 and PRK2. Interacts in vitro (via PRONE domain) with PRK1, PRK2, PRK3 and PRK4. The C-terminal region is also important for the interaction with PRK2. In terms of processing, phosphorylated at Ser-460 and Ser-480 by PRK2. In terms of tissue distribution, expressed in roots, cotyledons, leaves, stems, sepals, petals, anthers, pollen grains, stigmas and siliques.

The protein resides in the cytoplasm. It localises to the cytosol. Its subcellular location is the cell membrane. Phosphorylation at Ser-460 and Ser-480 by PRK2 releases ROPGEF1 auto-inhibition, thereby activating ROPGEF1, which in turn activates ARAC11/ROP1. Guanine-nucleotide exchange factor (GEF) that acts as an activator of Rop (Rho of plants) GTPases by promoting the exchange of GDP for GTP. Acts downstream of PRK2 in the control of polarized pollen tube growth by activating ARAC11/ROP1. In association with ROPGEF4, acts as a specific regulator of ARAC10/ROP11 function in ABA-mediated stomatal closure. May play a role in the Rac/Rop-signaling pathway that controls ROS-mediated root hair development. The protein is Rop guanine nucleotide exchange factor 1 (ROPGEF1) of Arabidopsis thaliana (Mouse-ear cress).